The sequence spans 1111 residues: Cell death abnormality protein 1 (1111 aa).

An N-terminal signal peptide occupies residues 1-18 (MRLILLVLLATWQVVVDT). Over 19–910 (RAPTFPDKLT…NGAGRSTGLT (892 aa)) the chain is Extracellular. Residues 41–113 (GDHVCTVKTI…QCCDGYYQTK (73 aa)) form the EMI domain. 15 disulfides stabilise this stretch: Cys-45/Cys-106, Cys-71/Cys-80, Cys-105/Cys-117, Cys-121/Cys-130, Cys-125/Cys-136, Cys-138/Cys-147, Cys-160/Cys-172, Cys-166/Cys-179, Cys-181/Cys-190, Cys-203/Cys-215, Cys-209/Cys-221, Cys-223/Cys-232, Cys-245/Cys-257, Cys-251/Cys-264, and Cys-266/Cys-275. The N-linked (GlcNAc...) asparagine glycan is linked to Asn-66. 4 EGF-like domains span residues 118–148 (LPDCNPPCKKGKCIEPGKCECDPGYGGKYCA), 156–191 (WGLGCSKSCDCENGANCDPELGTCICTSGFQGERCE), 199–233 (WGPNCVKSCPCQNGGKCNKEGKCVCSDGWGGEFCL), and 241–276 (FGAECKFECNCQNGATCDNTNGKCICKSGYHGALCE). 2 N-linked (GlcNAc...) asparagine glycosylation sites follow: Asn-333 and Asn-345. The 38-residue stretch at 421 to 458 (YGPNCEKQAMCDWNHASECNPETGSCVCKPGRTGKNCS) folds into the EGF-like 5 domain. 3 disulfides stabilise this stretch: Cys-425–Cys-439, Cys-431–Cys-446, and Cys-448–Cys-457. Asn-456 carries an N-linked (GlcNAc...) asparagine glycan. The FU repeat unit spans residues 629–680 (DQKCDPNTFGFLCQETVTPSPCASTDPKNGVCLSCPPGSSGIHCEHNCPAGS). One can recognise an EGF-like 6 domain in the interval 681 to 716 (YGDGCQQVCSCADGHGCDPTTGECICEPGYHGKTCS). Intrachain disulfides connect Cys-685–Cys-697, Cys-691–Cys-704, and Cys-706–Cys-715. Residues 911–931 (WFFVLLIVALCGGLGLIALFY) traverse the membrane as a helical segment. An interaction with trim-21 region spans residues 931–1007 (YRNKYQKEKD…EEELENKKIH (77 aa)). At 932–1111 (RNKYQKEKDP…KKRAQDNLYT (180 aa)) the chain is on the cytoplasmic side. Disordered stretches follow at residues 940–993 (DPDM…PNGL) and 1006–1111 (IHGR…NLYT). Residues 962 to 965 (NPLY) carry the NPXY motif. A compositionally biased stretch (polar residues) spans 963 to 980 (PLYSRQSVFPDSDAFSSE). Tyr-1019 carries the post-translational modification Phosphotyrosine; by SRC. Positions 1019 to 1022 (YASL) match the YXXL motif. Residues 1030–1039 (SSSSASASAS) show a composition bias toward low complexity. Over residues 1068–1083 (NSISPAHAVTTSNHNE) the composition is skewed to polar residues.

Interacts (via C-terminus) with ced-6 (via PTB domain). Interacts with nck-1; the interaction is required for ced-1 degradation through the proteasome pathway. Interacts with V-ATPase vha-10. Phosphorylation of Tyr-1019, within the YXXL motif, by src-1 is thought to initiate phagosomal formation. Post-translationally, 'Lys-48'-linked polyubiquitination by trim-21 leads to proteasomal degradation. In terms of tissue distribution, expressed in engulfing cells and syncytium hypodermal cells. Ced-7 is necessary for clustering around cell corpses prior to engulfment.

Its subcellular location is the cell membrane. It is found in the cytoplasmic vesicle. The protein resides in the phagosome membrane. In terms of biological role, involved in programmed cell death, also called apoptosis, in both somatic and germ cells. Acts by recruiting ced-6 to phagosomes which enables actin-dependent cytoskeletal reorganization and subsequent engulfment of the apoptotic cell corpse. Has a role in the association of ppk-3 and rab-7 with the phagosomal surface which is necessary for the incorporation of lysosomes to phagosomes during phagosome maturation. Activates the expression of unfolded protein response genes, which are involved in the immune response to live bacteria. The sequence is that of Cell death abnormality protein 1 from Caenorhabditis elegans.